The chain runs to 317 residues: MKLTESNRSPRTTNTTDLSGKVAVVTGAAAGLGRAEALGLARLGATVVVNDVASALDASDVVDEIGAAAADAGAKAVAVAGDISQRATADELLASAVGLGGLDIVVNNAGITRDRMLFNMSDEEWDAVIAVHLRGHFLLTRNAAAYWRDKAKDAEGGSVFGRLVNTSSEAGLVGPVGQANYAAAKAGITALTLSAARALGRYGVCANVICPRARTAMTADVFGAAPDVEAGQIDPLSPQHVVSLVQFLASPAAAEVNGQVFIVYGPQVTLVSPPHMERRFSADGTSWDPTELTATLRDYFAGRDPEQSFSATDLMRQ.

The NAD(+) site is built by L32, D51, D82, I83, N108, S168, Y181, K185, and T215. Residues S168, Y181, and K185 contribute to the active site.

It belongs to the short-chain dehydrogenases/reductases (SDR) family. Homodimer, with 1 active site on each face.

The catalysed reaction is (22S)-hydroxy-3-oxo-chol-4-ene-24-oyl-CoA + NAD(+) = 3,22-dioxochol-4-en-24-oyl-CoA + NADH + H(+). The protein operates within steroid metabolism; cholesterol degradation. A reversible dehydrogenase involved in cholesterol side-chain degradation. Catalyzes the oxidation of hydroxyl-cholesterol-CoA ester metabolic intermediate (22S)-HOCO-CoA (3-oxo-chol-4-ene-(22S)-hydroxy-24-oyl-CoA), the product of ChsH3, has no activity on (22R)-HOCO-CoA (the product of EchA19). Also acts on (3R)-hydroxyoctanoyl-CoA and 17-beta-hydroxyandrost-4-en-3-one, but not on 7-alpha-hydroxyandrost-4-en-3-one, uses NAD(+) but not NADP(+). This chain is Hydroxyacyl-CoA dehydrogenase ChsB1, found in Mycobacterium tuberculosis (strain ATCC 25618 / H37Rv).